We begin with the raw amino-acid sequence, 229 residues long: UPF0758 protein CLL_A0562 (229 aa).

The MPN domain occupies 107-229 (KIMSPNDLAM…FISLKEKGFI (123 aa)). The Zn(2+) site is built by His-178, His-180, and Asp-191. Residues 178–191 (HNHPSGDPTPSKED) carry the JAMM motif motif.

It belongs to the UPF0758 family.

This is UPF0758 protein CLL_A0562 from Clostridium botulinum (strain Eklund 17B / Type B).